The chain runs to 374 residues: MVKLLNSTRELSINALSMLNSFGDMVAQATGLNRKLLTTDSSDATARRLLQISNAKPNATVALDGSGQYKTIKEALDAVPKKNTEPFIIFIKAGVYKEYIDIPKSMTNVVLIGEGPTKTKITGNKSVKDGPSTFHTTTVGVNGANFVAKNIGFENTAGPEKEQAVALRVSADKAIIYNCQIDGYQDTLYVHTYRQFYRDCTITGTVDFIFGNGEAVLQNCKVIVRKPAQNQSCMVTAQGRTEPIQKGAIVLQNCEIKPDTDYFSLSPPSKTYLGRPWKEYSRTIIMQSYIDKFIEPEGWAPWNITNFGRDTSYYAEYQNRGPGAALDKRITWKGFQKGFTGEAAQKFTAGVYINNDENWLQKANVPYEAGMMKV.

An N-terminal signal peptide occupies residues 1 to 31 (MVKLLNSTRELSINALSMLNSFGDMVAQATG). Asparagine 58 and asparagine 124 each carry an N-linked (GlcNAc...) asparagine glycan. Threonine 133 and glutamine 163 together coordinate substrate. Aspartate 186 (proton donor) is an active-site residue. Cysteine 200 and cysteine 220 are oxidised to a cystine. The active-site Nucleophile is the aspartate 207. Asparagine 230 is a glycosylation site (N-linked (GlcNAc...) asparagine). The substrate site is built by arginine 275 and tryptophan 277. Asparagine 303 carries an N-linked (GlcNAc...) asparagine glycan.

This sequence belongs to the pectinesterase family. In terms of tissue distribution, pollen, and at much lower levels in pistils and petals.

The protein resides in the secreted. Its subcellular location is the cell wall. The enzyme catalyses [(1-&gt;4)-alpha-D-galacturonosyl methyl ester](n) + n H2O = [(1-&gt;4)-alpha-D-galacturonosyl](n) + n methanol + n H(+). The protein operates within glycan metabolism; pectin degradation; 2-dehydro-3-deoxy-D-gluconate from pectin: step 1/5. May play a role in pollen germination and/or tube growth. This chain is Pectinesterase (PPE1), found in Petunia integrifolia (Violet-flowered petunia).